Reading from the N-terminus, the 270-residue chain is 2-dehydro-3-deoxyphosphooctonate aldolase (270 aa).

Belongs to the KdsA family.

It localises to the cytoplasm. It catalyses the reaction D-arabinose 5-phosphate + phosphoenolpyruvate + H2O = 3-deoxy-alpha-D-manno-2-octulosonate-8-phosphate + phosphate. It functions in the pathway carbohydrate biosynthesis; 3-deoxy-D-manno-octulosonate biosynthesis; 3-deoxy-D-manno-octulosonate from D-ribulose 5-phosphate: step 2/3. It participates in bacterial outer membrane biogenesis; lipopolysaccharide biosynthesis. The sequence is that of 2-dehydro-3-deoxyphosphooctonate aldolase from Helicobacter hepaticus (strain ATCC 51449 / 3B1).